The following is a 213-amino-acid chain: MNKTLIINAHPKVDDTSSVSIKVFNHFLESYTELIPNNETIEQINLYDDVVPMIDKTVLSAWEEQGNGQQLTDEEQKVTERMSEILQQFKSANTYVIVLPLHNFNIPSKLKDYMDNIMIARETFKYTETGSVGLLKDGRRMLVIQASGSIYTNDDWYTDVEYSHKYLKAMFNFLGIEDYQIVRAQGTAVLDPNEVLQNAYKEVKEAASRLANK.

18-20 (SVS) contacts FMN.

It belongs to the azoreductase type 1 family. As to quaternary structure, homodimer. The cofactor is FMN.

It catalyses the reaction 2 a quinone + NADH + H(+) = 2 a 1,4-benzosemiquinone + NAD(+). The catalysed reaction is N,N-dimethyl-1,4-phenylenediamine + anthranilate + 2 NAD(+) = 2-(4-dimethylaminophenyl)diazenylbenzoate + 2 NADH + 2 H(+). Functionally, quinone reductase that provides resistance to thiol-specific stress caused by electrophilic quinones. Also exhibits azoreductase activity. Catalyzes the reductive cleavage of the azo bond in aromatic azo compounds to the corresponding amines. This is FMN-dependent NADH:quinone oxidoreductase 1 from Bacillus cereus (strain ATCC 10987 / NRS 248).